Here is a 265-residue protein sequence, read N- to C-terminus: MLVHPQFDPVAIAVGPVAVRWYGLMYLLAFVLFVVLGRAHARRRPELGWNAQAIDDLLLYGVLGVIIGGRLGEVLFYQPGYYLSHPAEILAVWKGGMSFHGGFLGVLVAMWLYGQRSGRGFWQITDFIAPLVPTGLAAGRIGNFINGELWGRPASPDLPWAMIFPWVDALPRHPSQLYQAAGEGLLLFAIVWVFAAKPRPLRAVSAVFLIGYGSLRFVAEFFRTPDPGIFSDLVPGLSTAQWLCVPMVVVGLALLKHAAHARARG.

7 helical membrane passes run 17 to 37 (VAVRWYGLMYLLAFVLFVVLG), 57 to 77 (LLLYGVLGVIIGGRLGEVLFY), 89 to 109 (ILAVWKGGMSFHGGFLGVLVA), 127 to 147 (FIAPLVPTGLAAGRIGNFING), 176 to 196 (QLYQAAGEGLLLFAIVWVFAA), 201 to 218 (LRAVSAVFLIGYGSLRFV), and 233 to 253 (LVPGLSTAQWLCVPMVVVGLA). R140 is an a 1,2-diacyl-sn-glycero-3-phospho-(1'-sn-glycerol) binding site.

It belongs to the Lgt family.

The protein localises to the cell inner membrane. The enzyme catalyses L-cysteinyl-[prolipoprotein] + a 1,2-diacyl-sn-glycero-3-phospho-(1'-sn-glycerol) = an S-1,2-diacyl-sn-glyceryl-L-cysteinyl-[prolipoprotein] + sn-glycerol 1-phosphate + H(+). The protein operates within protein modification; lipoprotein biosynthesis (diacylglyceryl transfer). Catalyzes the transfer of the diacylglyceryl group from phosphatidylglycerol to the sulfhydryl group of the N-terminal cysteine of a prolipoprotein, the first step in the formation of mature lipoproteins. The sequence is that of Phosphatidylglycerol--prolipoprotein diacylglyceryl transferase from Azoarcus sp. (strain BH72).